We begin with the raw amino-acid sequence, 281 residues long: RNA polymerase sigma factor RpoH (281 aa).

The tract at residues leucine 52 to arginine 121 is sigma-70 factor domain-2. The Interaction with polymerase core subunit RpoC signature appears at aspartate 76–glutamine 79. The interval alanine 226 to serine 277 is sigma-70 factor domain-4. Positions leucine 250 to threonine 269 form a DNA-binding region, H-T-H motif.

The protein belongs to the sigma-70 factor family. RpoH subfamily. As to quaternary structure, interacts with the RNA polymerase core enzyme.

The protein localises to the cytoplasm. Functionally, sigma factors are initiation factors that promote the attachment of RNA polymerase to specific initiation sites and are then released. This sigma factor is involved in regulation of expression of heat shock genes. This chain is RNA polymerase sigma factor RpoH, found in Haemophilus influenzae (strain ATCC 51907 / DSM 11121 / KW20 / Rd).